Consider the following 31-residue polypeptide: Kallikrein-1 (31 aa).

Residues 1–31 form the Peptidase S1 domain; it reads VIGGQECARDSHPWQAAVYHFSDIECGGVLV.

This sequence belongs to the peptidase S1 family. Kallikrein subfamily.

It carries out the reaction Preferential cleavage of Arg-|-Xaa bonds in small molecule substrates. Highly selective action to release kallidin (lysyl-bradykinin) from kininogen involves hydrolysis of Met-|-Xaa or Leu-|-Xaa.. Its function is as follows. Glandular kallikreins cleave Met-Lys and Arg-Ser bonds in kininogen to release Lys-bradykinin. The sequence is that of Kallikrein-1 from Cavia porcellus (Guinea pig).